Here is a 185-residue protein sequence, read N- to C-terminus: Phosphatidylglycerophosphatase GEP4, mitochondrial (185 aa).

The Phosphoryl acceptor signature appears at 45–49 (DKDNC).

This sequence belongs to the GEP4 family.

It is found in the mitochondrion inner membrane. It carries out the reaction a 1,2-diacyl-sn-glycero-3-phospho-(1'-sn-glycero-3'-phosphate) + H2O = a 1,2-diacyl-sn-glycero-3-phospho-(1'-sn-glycerol) + phosphate. It functions in the pathway phospholipid metabolism; phosphatidylglycerol biosynthesis; phosphatidylglycerol from CDP-diacylglycerol: step 2/2. Functionally, phosphatidylglycerophosphatase involved in the biosynthesis of cardiolipin (CL), a unique dimeric phosphoglycerolipid predominantly present in mitochondrial membranes and which has important functions for cellular energy metabolism, mitochondrial dynamics and the initiation of apoptotic pathways. Required for the stability of respiratory chain supercomplexes and for growth at elevated temperature, in presence of ethidium bromide or in absence of prohibitins. The protein is Phosphatidylglycerophosphatase GEP4, mitochondrial (GEP4) of Saccharomyces cerevisiae (strain ATCC 204508 / S288c) (Baker's yeast).